A 182-amino-acid polypeptide reads, in one-letter code: Translation initiation factor IF-3 (182 aa).

The tract at residues 1–22 (MPLGDCNISTPDNKQNRKNQEI) is disordered.

This sequence belongs to the IF-3 family. Monomer.

It localises to the cytoplasm. IF-3 binds to the 30S ribosomal subunit and shifts the equilibrium between 70S ribosomes and their 50S and 30S subunits in favor of the free subunits, thus enhancing the availability of 30S subunits on which protein synthesis initiation begins. This chain is Translation initiation factor IF-3, found in Xanthomonas axonopodis pv. citri (strain 306).